Reading from the N-terminus, the 342-residue chain is MKRVFLWLIFVLAFHKLLAEKIGDIASVVGVRDNQLIGYGLVIGLNGTGDKSGSKFTMQSISNMLESVNVKISADDIKSKNVAAVMITASLPPFARQGDKIDIHISSIGDAKSIQGGTLVMTPLNAVDGNIYALAQGAITSGNSNNLLSANIINGATIEREVSYDLFHKNAMTLSLKNPNFKNAIQVQNTLNKVFGNKVAIALDPKTIQITRPERFSMVEFLALVQEIPINYSAKNKIIVDEKSGTIVSGVDIIVHPIVVTSQDITLKITKEPLNDSKNTQDLDNNMSLDTAHNTLSSNGKNITIAGVVKALQKIGVSAKGMVSILQALKKSGAISAEMEIL.

The N-terminal stretch at 1 to 19 (MKRVFLWLIFVLAFHKLLA) is a signal peptide.

This sequence belongs to the FlgI family. In terms of assembly, the basal body constitutes a major portion of the flagellar organelle and consists of four rings (L,P,S, and M) mounted on a central rod.

The protein localises to the periplasm. The protein resides in the bacterial flagellum basal body. Assembles around the rod to form the L-ring and probably protects the motor/basal body from shearing forces during rotation. This chain is Flagellar P-ring protein, found in Helicobacter pylori (strain G27).